A 396-amino-acid polypeptide reads, in one-letter code: Lysophospholipid transporter LplT (396 aa).

At 1-17 (MSESVHTNTSLWSKGMK) the chain is on the periplasmic side. A helical transmembrane segment spans residues 18-38 (AVIVAQFLSAFGDNALLFATL). The Cytoplasmic portion of the chain corresponds to 39–52 (ALLKAQFYPEWSQP). The helical transmembrane segment at 53-73 (ILQMVFVGAYILLAPFVGQVA) threads the bilayer. Residues 74-90 (DSFAKGRVMMFANGLKL) lie on the Periplasmic side of the membrane. A helical membrane pass occupies residues 91-111 (LGAASICFGINPFLGYTLVGV). Over 112–144 (GAAAYSPAKYGILGELTTGSKLVKANGLMEASA) the chain is Cytoplasmic. The chain crosses the membrane as a helical span at residues 145–165 (IAAILLGSVAGGVLADWHVLV). Ala166 is a topological domain (periplasmic). A helical membrane pass occupies residues 167–187 (LAACALAYGGAVVANIYIPKL). Residues 188–225 (AARPGQSWNLINMTRSFLNACTSLWCNGETRFSLVGAS) lie on the Cytoplasmic side of the membrane. The chain crosses the membrane as a helical span at residues 226–246 (LFWGAGVTLRFLLVLWVPVAL). The Periplasmic portion of the chain corresponds to 247–255 (GITDNATPT). Residues 256–276 (YLNAMVAIGIVVGAGAAAKLV) form a helical membrane-spanning segment. Topologically, residues 277-279 (TLE) are cytoplasmic. A helical transmembrane segment spans residues 280–300 (TVSRCMPAGILIGVVVLIFSL). At 301–303 (QHE) the chain is on the periplasmic side. A helical transmembrane segment spans residues 304–324 (LLPAYALLMLIGVLGGFFVVP). The Cytoplasmic portion of the chain corresponds to 325–342 (LNALLQERGKKSVGAGNA). The helical transmembrane segment at 343–363 (IAVQNLGENSAMLLMLGIYSL) threads the bilayer. Topologically, residues 364–365 (AV) are periplasmic. Residues 366 to 386 (MVGIPVVPIGIGFGALFALAI) form a helical membrane-spanning segment. At 387-396 (TALWIWQRRH) the chain is on the cytoplasmic side.

Belongs to the major facilitator superfamily. LplT (TC 2.A.1.42) family.

It localises to the cell inner membrane. Catalyzes the facilitated diffusion of 2-acyl-glycero-3-phosphoethanolamine (2-acyl-GPE) into the cell. This is Lysophospholipid transporter LplT from Shigella flexneri serotype 5b (strain 8401).